The following is a 110-amino-acid chain: Iron-sulfur cluster assembly protein CyaY (110 aa).

The protein belongs to the frataxin family.

Involved in iron-sulfur (Fe-S) cluster assembly. May act as a regulator of Fe-S biogenesis. This is Iron-sulfur cluster assembly protein CyaY from Pseudomonas fluorescens (strain ATCC BAA-477 / NRRL B-23932 / Pf-5).